The following is a 148-amino-acid chain: Ergosterol biosynthetic protein 28 (148 aa).

The Cytoplasmic segment spans residues 1 to 25; it reads MFSLQDVITTTKTTLAAMPKGYLPK. The chain crosses the membrane as a helical span at residues 26–46; that stretch reads WLLFISIVSVFNSIQTYVSGL. Residues 47–92 are Lumenal-facing; it reads ELTRKVYERKPTETTHLSARTFGTWTFISCVIRFYGAMYLNEPHIF. Residues 93–113 traverse the membrane as a helical segment; that stretch reads ELVFMSYMVALFHFGSELLIF. Residues 114 to 120 are Cytoplasmic-facing; it reads RTCKLGK. Residues 121–136 form a helical membrane-spanning segment; that stretch reads GFMGPLVVSTTSLVWM. Residues 137–148 are Lumenal-facing; the sequence is YKQREYYTGVAW.

The protein belongs to the ERG28 family. Heterotetramer of ERG25, ERG26, ERG27 and ERG28. ERG28 acts as a scaffold to tether ERG27 and other 4,4-demethylation-related enzymes, forming a demethylation enzyme complex, in the endoplasmic reticulum. Interacts with ERG25, ERG26 and ERG27. Also interacts with ERG1, ERG3, ERG5, ERG6 and ERG11.

The protein resides in the endoplasmic reticulum membrane. Part of the third module of ergosterol biosynthesis pathway that includes the late steps of the pathway. ERG28 has a role as a scaffold to help anchor the catalytic components of the C-4 demethylation complex ERG25, ERG26 and ERG27 to the endoplasmic reticulum. The third module or late pathway involves the ergosterol synthesis itself through consecutive reactions that mainly occur in the endoplasmic reticulum (ER) membrane. Firstly, the squalene synthase ERG9 catalyzes the condensation of 2 farnesyl pyrophosphate moieties to form squalene, which is the precursor of all steroids. Squalene synthase is crucial for balancing the incorporation of farnesyl diphosphate (FPP) into sterol and nonsterol isoprene synthesis. Secondly, the squalene epoxidase ERG1 catalyzes the stereospecific oxidation of squalene to (S)-2,3-epoxysqualene, which is considered to be a rate-limiting enzyme in steroid biosynthesis. Then, the lanosterol synthase ERG7 catalyzes the cyclization of (S)-2,3 oxidosqualene to lanosterol, a reaction that forms the sterol core. In the next steps, lanosterol is transformed to zymosterol through a complex process involving various demethylation, reduction and desaturation reactions. The lanosterol 14-alpha-demethylase ERG11 (also known as CYP51) catalyzes C14-demethylation of lanosterol to produce 4,4'-dimethyl cholesta-8,14,24-triene-3-beta-ol, which is critical for ergosterol biosynthesis. The C-14 reductase ERG24 reduces the C14=C15 double bond of 4,4-dimethyl-cholesta-8,14,24-trienol to produce 4,4-dimethyl-cholesta-8,24-dienol. 4,4-dimethyl-cholesta-8,24-dienol is substrate of the C-4 demethylation complex ERG25-ERG26-ERG27 in which ERG25 catalyzes the three-step monooxygenation required for the demethylation of 4,4-dimethyl and 4alpha-methylsterols, ERG26 catalyzes the oxidative decarboxylation that results in a reduction of the 3-beta-hydroxy group at the C-3 carbon to an oxo group, and ERG27 is responsible for the reduction of the keto group on the C-3. ERG28 has a role as a scaffold to help anchor ERG25, ERG26 and ERG27 to the endoplasmic reticulum and ERG29 regulates the activity of the iron-containing C4-methylsterol oxidase ERG25. Then, the sterol 24-C-methyltransferase ERG6 catalyzes the methyl transfer from S-adenosyl-methionine to the C-24 of zymosterol to form fecosterol. The C-8 sterol isomerase ERG2 catalyzes the reaction which results in unsaturation at C-7 in the B ring of sterols and thus converts fecosterol to episterol. The sterol-C5-desaturase ERG3 then catalyzes the introduction of a C-5 double bond in the B ring to produce 5-dehydroepisterol. The C-22 sterol desaturase ERG5 further converts 5-dehydroepisterol into ergosta-5,7,22,24(28)-tetraen-3beta-ol by forming the C-22(23) double bond in the sterol side chain. Finally, ergosta-5,7,22,24(28)-tetraen-3beta-ol is substrate of the C-24(28) sterol reductase ERG4 to produce ergosterol. The chain is Ergosterol biosynthetic protein 28 from Saccharomyces cerevisiae (strain ATCC 204508 / S288c) (Baker's yeast).